The chain runs to 629 residues: 1-deoxy-D-xylulose-5-phosphate synthase (629 aa).

Thiamine diphosphate is bound by residues H72 and 113–115 (GHA). D144 contacts Mg(2+). Thiamine diphosphate-binding positions include 145 to 146 (GA), N174, Y287, and E370. N174 serves as a coordination point for Mg(2+).

Belongs to the transketolase family. DXPS subfamily. Homodimer. It depends on Mg(2+) as a cofactor. Requires thiamine diphosphate as cofactor.

The enzyme catalyses D-glyceraldehyde 3-phosphate + pyruvate + H(+) = 1-deoxy-D-xylulose 5-phosphate + CO2. It participates in metabolic intermediate biosynthesis; 1-deoxy-D-xylulose 5-phosphate biosynthesis; 1-deoxy-D-xylulose 5-phosphate from D-glyceraldehyde 3-phosphate and pyruvate: step 1/1. Catalyzes the acyloin condensation reaction between C atoms 2 and 3 of pyruvate and glyceraldehyde 3-phosphate to yield 1-deoxy-D-xylulose-5-phosphate (DXP). The polypeptide is 1-deoxy-D-xylulose-5-phosphate synthase (Prochlorococcus marinus (strain AS9601)).